The sequence spans 957 residues: AP2-associated protein kinase 1 (957 aa).

Met1 is subject to N-acetylmethionine. The span at 1–11 shows a compositional bias: basic and acidic residues; it reads MKKFFDSRREQ. Residues 1 to 25 form a disordered region; it reads MKKFFDSRREQGGSGLGSGSSGGGG. Positions 12-25 are enriched in gly residues; that stretch reads GGSGLGSGSSGGGG. Ser14 carries the post-translational modification Phosphoserine. A Protein kinase domain is found at 46–315; the sequence is VTVDEVLAEG…QVSYFSFKLL (270 aa). ATP contacts are provided by residues 52-60 and Lys74; that span reads LAEGGFAIV. Asp176 serves as the catalytic Proton acceptor. A Phosphotyrosine modification is found at Tyr234. Ser235 bears the Phosphoserine mark. Disordered regions lie at residues 326 to 506 and 563 to 629; these read NSPI…AVHP and TAAA…AGHR. 2 positions are modified to phosphothreonine: Thr354 and Thr389. An Omega-N-methylarginine modification is found at Arg391. The span at 436–448 shows a compositional bias: pro residues; the sequence is PQAPPTSQQPPSA. Thr441 bears the Phosphothreonine mark. 2 stretches are compositionally biased toward low complexity: residues 449–506 and 563–601; these read PAQA…AVHP and TAAAAPQPQAQPAAAASPAPAQEPAQIQAPVRQQPKVQT. Residue Thr602 is modified to Phosphothreonine. Residues 607–617 are compositionally biased toward polar residues; that stretch reads IQGQKLGSLTP. Position 614 is a phosphoserine (Ser614). At Thr616 the chain carries Phosphothreonine. Phosphoserine occurs at positions 619, 620, 633, and 646. Thr649 bears the Phosphothreonine mark. The disordered stretch occupies residues 660–697; it reads SLNKSKSATTTPSGSPRASQQNVYNPSEGSTWNPFDDD. Residues 668 to 692 show a composition bias toward polar residues; it reads TTTPSGSPRASQQNVYNPSEGSTWN. A Phosphotyrosine modification is found at Tyr683. Phosphoserine is present on residues Ser727, Ser842, Ser933, and Ser934. Residues 819–956 are clathrin-binding domain (CBD); it reads EKADVAVESL…SLLLVDQLID (138 aa). Disordered regions lie at residues 832–855 and 919–941; these read LEPPVPQRLPSQTESVTSNRTDSL and VLITKNPQGGHSRNSSGSSESSL. Polar residues predominate over residues 840–855; it reads LPSQTESVTSNRTDSL. The span at 927 to 940 shows a compositional bias: low complexity; that stretch reads GGHSRNSSGSSESS.

Belongs to the protein kinase superfamily. Ser/Thr protein kinase family. Interacts (via CBD domain) with clathrin. Interacts with AP-2 complex. Interacts with NUMB. Interacts with alpha-adaptin. Interacts with EPS15 isoform 2. Interacts with membrane-bound activated NOTCH1 but not with the inactive full-length form of NOTCH1. Preferentially interacts with monoubiquitinated activated NOTCH1 compared to the non-ubiquitinated form. Autophosphorylated. In terms of tissue distribution, detected in brain (at protein level).

The protein resides in the cell membrane. It is found in the membrane. Its subcellular location is the clathrin-coated pit. The protein localises to the presynapse. It carries out the reaction L-seryl-[protein] + ATP = O-phospho-L-seryl-[protein] + ADP + H(+). It catalyses the reaction L-threonyl-[protein] + ATP = O-phospho-L-threonyl-[protein] + ADP + H(+). With respect to regulation, stimulated by clathrin. Functionally, regulates clathrin-mediated endocytosis by phosphorylating the AP2M1/mu2 subunit of the adaptor protein complex 2 (AP-2) which ensures high affinity binding of AP-2 to cargo membrane proteins during the initial stages of endocytosis. Preferentially, may phosphorylate substrates on threonine residues. Regulates phosphorylation of other AP-2 subunits as well as AP-2 localization and AP-2-mediated internalization of ligand complexes. Phosphorylates NUMB and regulates its cellular localization, promoting NUMB localization to endosomes. Binds to and stabilizes the activated form of NOTCH1, increases its localization in endosomes and regulates its transcriptional activity. The sequence is that of AP2-associated protein kinase 1 (AAK1) from Bos taurus (Bovine).